A 357-amino-acid polypeptide reads, in one-letter code: S-adenosylmethionine:tRNA ribosyltransferase-isomerase (357 aa).

This sequence belongs to the QueA family. In terms of assembly, monomer.

Its subcellular location is the cytoplasm. It carries out the reaction 7-aminomethyl-7-carbaguanosine(34) in tRNA + S-adenosyl-L-methionine = epoxyqueuosine(34) in tRNA + adenine + L-methionine + 2 H(+). It functions in the pathway tRNA modification; tRNA-queuosine biosynthesis. In terms of biological role, transfers and isomerizes the ribose moiety from AdoMet to the 7-aminomethyl group of 7-deazaguanine (preQ1-tRNA) to give epoxyqueuosine (oQ-tRNA). This is S-adenosylmethionine:tRNA ribosyltransferase-isomerase from Proteus mirabilis (strain HI4320).